The chain runs to 573 residues: Patellin-1 (573 aa).

Disordered regions lie at residues 1 to 74 (MAQE…SVKE) and 111 to 202 (REFT…DGTK). Residue Ala2 is modified to N-acetylalanine. The span at 18-28 (VKEKPITDKEV) shows a compositional bias: basic and acidic residues. Residue Thr29 is modified to Phosphothreonine. The span at 35–74 (AEKEEVAAPVSDEKAVPEKEVTPEKEAPAAEAEKSVSVKE) shows a compositional bias: basic and acidic residues. A coiled-coil region spans residues 89–157 (AEEVQKKALE…TTEVKVEEEK (69 aa)). Thr118 is subject to Phosphothreonine. 2 stretches are compositionally biased toward basic and acidic residues: residues 120–169 (VKEE…EKSS) and 176–190 (TKSE…EVTT). A Phosphoserine modification is found at Ser195. Residue Lys285 forms a Glycyl lysine isopeptide (Lys-Gly) (interchain with G-Cter in ubiquitin) linkage. One can recognise a CRAL-TRIO domain in the interval 295–468 (SGEEVSEFEK…KYGGLSKDTP (174 aa)). The region spanning 471-572 (EETITEAIVK…KKKVLYRFKT (102 aa)) is the GOLD domain.

It belongs to the patellin family. In terms of assembly, interacts with the deubiquitinating enzyme AMSH3. In terms of tissue distribution, expressed ubiquitously with higher levels in expanding roots and leaves (at protein level).

The protein localises to the membrane. Its subcellular location is the cytoplasm. In terms of biological role, carrier protein that may be involved in membrane-trafficking events associated with cell plate formation during cytokinesis. Binds to some hydrophobic molecules and promotes their transfer between the different cellular sites. Binds to phosphoinositides with a preference for PtdIns(5)P, PtdIns(4,5)P2 and PtdIns(3)P. This chain is Patellin-1 (PATL1), found in Arabidopsis thaliana (Mouse-ear cress).